We begin with the raw amino-acid sequence, 145 residues long: Large ribosomal subunit protein uL11 (145 aa).

It belongs to the universal ribosomal protein uL11 family. As to quaternary structure, part of the ribosomal stalk of the 50S ribosomal subunit. Interacts with L10 and the large rRNA to form the base of the stalk. L10 forms an elongated spine to which L12 dimers bind in a sequential fashion forming a multimeric L10(L12)X complex. Post-translationally, one or more lysine residues are methylated.

Forms part of the ribosomal stalk which helps the ribosome interact with GTP-bound translation factors. The sequence is that of Large ribosomal subunit protein uL11 from Porphyromonas gingivalis (strain ATCC 33277 / DSM 20709 / CIP 103683 / JCM 12257 / NCTC 11834 / 2561).